Reading from the N-terminus, the 302-residue chain is Sulfate adenylyltransferase subunit 2 (302 aa).

This sequence belongs to the PAPS reductase family. CysD subfamily. In terms of assembly, heterodimer composed of CysD, the smaller subunit, and CysN.

The catalysed reaction is sulfate + ATP + H(+) = adenosine 5'-phosphosulfate + diphosphate. The protein operates within sulfur metabolism; hydrogen sulfide biosynthesis; sulfite from sulfate: step 1/3. In terms of biological role, with CysN forms the ATP sulfurylase (ATPS) that catalyzes the adenylation of sulfate producing adenosine 5'-phosphosulfate (APS) and diphosphate, the first enzymatic step in sulfur assimilation pathway. APS synthesis involves the formation of a high-energy phosphoric-sulfuric acid anhydride bond driven by GTP hydrolysis by CysN coupled to ATP hydrolysis by CysD. This Xanthomonas axonopodis pv. citri (strain 306) protein is Sulfate adenylyltransferase subunit 2.